Here is a 64-residue protein sequence, read N- to C-terminus: Prokaryotic ubiquitin-like protein Pup (64 aa).

The segment at 1 to 32 is disordered; sequence MNAKQTQIMGGGGRDEDNAEDSAQASGQVQIN. Residues 20 to 58 are ARC ATPase binding; that stretch reads EDSAQASGQVQINTEGVDSLLDEIDGLLENNAEEFVRSY. Positions 21 to 32 are enriched in polar residues; that stretch reads DSAQASGQVQIN. An Isoglutamyl lysine isopeptide (Glu-Lys) (interchain with K-? in acceptor proteins) cross-link involves residue Glu-64.

This sequence belongs to the prokaryotic ubiquitin-like protein family. In terms of assembly, strongly interacts with the proteasome-associated ATPase ARC through a hydrophobic interface; the interacting region of Pup lies in its C-terminal half. There is one Pup binding site per ARC hexamer ring.

It participates in protein degradation; proteasomal Pup-dependent pathway. In terms of biological role, protein modifier that is covalently attached to lysine residues of substrate proteins, thereby targeting them for proteasomal degradation. The tagging system is termed pupylation. In Corynebacterium glutamicum (strain R), this protein is Prokaryotic ubiquitin-like protein Pup.